The primary structure comprises 692 residues: Elongation factor G (692 aa).

The 275-residue stretch at Glu8–Val282 folds into the tr-type G domain. Residues Ala17–Thr24, Asp81–His85, and Asn135–Asp138 contribute to the GTP site.

This sequence belongs to the TRAFAC class translation factor GTPase superfamily. Classic translation factor GTPase family. EF-G/EF-2 subfamily.

Its subcellular location is the cytoplasm. Its function is as follows. Catalyzes the GTP-dependent ribosomal translocation step during translation elongation. During this step, the ribosome changes from the pre-translocational (PRE) to the post-translocational (POST) state as the newly formed A-site-bound peptidyl-tRNA and P-site-bound deacylated tRNA move to the P and E sites, respectively. Catalyzes the coordinated movement of the two tRNA molecules, the mRNA and conformational changes in the ribosome. This is Elongation factor G from Geobacillus sp. (strain WCH70).